Reading from the N-terminus, the 92-residue chain is Long neurotoxin 1 (92 aa).

A signal peptide spans Met-1 to Thr-21. Disulfide bonds link Cys-24/Cys-42, Cys-35/Cys-63, Cys-48/Cys-52, Cys-67/Cys-79, and Cys-80/Cys-85.

Belongs to the three-finger toxin family. Long-chain subfamily. Type II alpha-neurotoxin sub-subfamily. In terms of tissue distribution, expressed by the venom gland.

Its subcellular location is the secreted. Binds with high affinity to muscular (alpha-1/CHRNA1) and neuronal (alpha-7/CHRNA7) nicotinic acetylcholine receptor (nAChR) and inhibits acetylcholine from binding to the receptor, thereby impairing neuromuscular and neuronal transmission. In Oxyuranus microlepidotus (Inland taipan), this protein is Long neurotoxin 1.